A 222-amino-acid polypeptide reads, in one-letter code: Cytidylate kinase (222 aa).

10–18 (GTSSSGKSV) serves as a coordination point for ATP.

The protein belongs to the cytidylate kinase family. Type 1 subfamily.

It is found in the cytoplasm. The enzyme catalyses CMP + ATP = CDP + ADP. It carries out the reaction dCMP + ATP = dCDP + ADP. The protein is Cytidylate kinase of Mycoplasma capricolum subsp. capricolum (strain California kid / ATCC 27343 / NCTC 10154).